The chain runs to 258 residues: Tryptophan synthase alpha chain (258 aa).

Active-site proton acceptor residues include glutamate 47 and aspartate 58.

Belongs to the TrpA family. Tetramer of two alpha and two beta chains.

The enzyme catalyses (1S,2R)-1-C-(indol-3-yl)glycerol 3-phosphate + L-serine = D-glyceraldehyde 3-phosphate + L-tryptophan + H2O. It participates in amino-acid biosynthesis; L-tryptophan biosynthesis; L-tryptophan from chorismate: step 5/5. In terms of biological role, the alpha subunit is responsible for the aldol cleavage of indoleglycerol phosphate to indole and glyceraldehyde 3-phosphate. In Bacillus cereus (strain G9842), this protein is Tryptophan synthase alpha chain.